The following is a 245-amino-acid chain: Biosynthetic peptidoglycan transglycosylase (245 aa).

Residues 24–44 (LVVIGAWLAGILLFSFLPVPF) traverse the membrane as a helical segment.

This sequence belongs to the glycosyltransferase 51 family.

Its subcellular location is the cell inner membrane. It catalyses the reaction [GlcNAc-(1-&gt;4)-Mur2Ac(oyl-L-Ala-gamma-D-Glu-L-Lys-D-Ala-D-Ala)](n)-di-trans,octa-cis-undecaprenyl diphosphate + beta-D-GlcNAc-(1-&gt;4)-Mur2Ac(oyl-L-Ala-gamma-D-Glu-L-Lys-D-Ala-D-Ala)-di-trans,octa-cis-undecaprenyl diphosphate = [GlcNAc-(1-&gt;4)-Mur2Ac(oyl-L-Ala-gamma-D-Glu-L-Lys-D-Ala-D-Ala)](n+1)-di-trans,octa-cis-undecaprenyl diphosphate + di-trans,octa-cis-undecaprenyl diphosphate + H(+). It participates in cell wall biogenesis; peptidoglycan biosynthesis. Functionally, peptidoglycan polymerase that catalyzes glycan chain elongation from lipid-linked precursors. This chain is Biosynthetic peptidoglycan transglycosylase, found in Pectobacterium atrosepticum (strain SCRI 1043 / ATCC BAA-672) (Erwinia carotovora subsp. atroseptica).